A 532-amino-acid chain; its full sequence is Protein tweety homolog 2 (532 aa).

The Extracellular segment spans residues Met-1–Ser-44. A helical transmembrane segment spans residues Leu-45–Val-65. Topologically, residues Tyr-66 to Cys-87 are cytoplasmic. Residues Cys-88–Phe-108 traverse the membrane as a helical segment. Residues Tyr-109–Trp-213 are Extracellular-facing. Residues Glu-113 and Asp-116 each contribute to the Ca(2+) site. A glycan (N-linked (GlcNAc...) asparagine) is linked at Asn-129. Positions Arg-164–Asp-166 match the RGD motif. Phosphothreonine is present on Thr-199. The chain crosses the membrane as a helical span at residues Leu-214–Leu-234. At Ala-235–Cys-240 the chain is on the cytoplasmic side. The helical transmembrane segment at Leu-241–Ala-261 threads the bilayer. Over Ala-262–Gly-385 the chain is Extracellular. Cystine bridges form between Cys-274-Cys-382 and Cys-300-Cys-367. 2 N-linked (GlcNAc...) asparagine glycosylation sites follow: Asn-283 and Asn-352. The helical transmembrane segment at Ile-386–Leu-406 threads the bilayer. Residues Thr-407–Ser-532 lie on the Cytoplasmic side of the membrane. Residue Ser-504 is modified to Phosphoserine. A PY-motif; mediates interaction with NEDD4L motif is present at residues Pro-506–Tyr-509.

Belongs to the tweety family. Forms cis-homodimers in the presence of Ca(+2) and forms monomers and trans-dimers in the absence of Ca(2+). Interacts with NEDD4L. Post-translationally, ubiquitinated by NEDD4L, leading to its proteasomal degradation.

Its subcellular location is the cell membrane. The catalysed reaction is chloride(in) = chloride(out). It catalyses the reaction L-glutamate(out) = L-glutamate(in). With respect to regulation, inhibited by (4-[(2-butyl-6,7-dichloro-2- cyclopentyl-2,3-dihydro-1-oxo-1H-inden-5-yl)oxy]butanoic acid). Its function is as follows. Calcium-independent, swelling-dependent volume-regulated anion channel (VRAC-swell) which plays a pivotal role in the process of regulatory volume decrease (RVD) in the brain through the efflux of anions like chloride and organic osmolytes like glutamate. Probable large-conductance Ca(2+)-activated chloride channel. The protein is Protein tweety homolog 2 (Ttyh2) of Mus musculus (Mouse).